A 107-amino-acid chain; its full sequence is Nucleoid-associated protein A1E_05550 (107 aa).

This sequence belongs to the YbaB/EbfC family. Homodimer.

The protein resides in the cytoplasm. It localises to the nucleoid. Functionally, binds to DNA and alters its conformation. May be involved in regulation of gene expression, nucleoid organization and DNA protection. In Rickettsia canadensis (strain McKiel), this protein is Nucleoid-associated protein A1E_05550.